The primary structure comprises 209 residues: Uracil phosphoribosyltransferase (209 aa).

Residues R79, R104, and 131 to 139 (DPMLATGGS) each bind 5-phospho-alpha-D-ribose 1-diphosphate. Uracil is bound by residues I194 and 199 to 201 (GDA). D200 provides a ligand contact to 5-phospho-alpha-D-ribose 1-diphosphate.

It belongs to the UPRTase family. It depends on Mg(2+) as a cofactor.

It carries out the reaction UMP + diphosphate = 5-phospho-alpha-D-ribose 1-diphosphate + uracil. Its pathway is pyrimidine metabolism; UMP biosynthesis via salvage pathway; UMP from uracil: step 1/1. Allosterically activated by GTP. Its function is as follows. Catalyzes the conversion of uracil and 5-phospho-alpha-D-ribose 1-diphosphate (PRPP) to UMP and diphosphate. In Bacillus licheniformis (strain ATCC 14580 / DSM 13 / JCM 2505 / CCUG 7422 / NBRC 12200 / NCIMB 9375 / NCTC 10341 / NRRL NRS-1264 / Gibson 46), this protein is Uracil phosphoribosyltransferase.